The chain runs to 235 residues: MVLTNPAEIRNPAAPPEITQGLSENVILTTLDDLYNWARLSSLWPLMYGTACCFIEFAALIGSRFDFDRFGLVPRCSPRQADLLITAGTVTMKMAPALVRLYEQMPEPKYVIAMGACTITGGMFSADSTTTVRGVDKLLPVDVYIPGCPPRPEAIIDAIVKLRKKVANDSIQERGKLLQTNRYYSTTHQMKPTAPLLTGEYLRSAARQAGPLPAAAGAAVAPQLPVTEKEGRDRA.

Residues cysteine 52, cysteine 53, cysteine 117, and cysteine 148 each coordinate [4Fe-4S] cluster. Over residues 216–226 (AGAAVAPQLPV) the composition is skewed to low complexity. A disordered region spans residues 216 to 235 (AGAAVAPQLPVTEKEGRDRA).

Belongs to the complex I 20 kDa subunit family. As to quaternary structure, NDH-1 can be composed of about 15 different subunits; different subcomplexes with different compositions have been identified which probably have different functions. The cofactor is [4Fe-4S] cluster.

The protein localises to the cellular thylakoid membrane. It carries out the reaction a plastoquinone + NADH + (n+1) H(+)(in) = a plastoquinol + NAD(+) + n H(+)(out). The catalysed reaction is a plastoquinone + NADPH + (n+1) H(+)(in) = a plastoquinol + NADP(+) + n H(+)(out). NDH-1 shuttles electrons from an unknown electron donor, via FMN and iron-sulfur (Fe-S) centers, to quinones in the respiratory and/or the photosynthetic chain. The immediate electron acceptor for the enzyme in this species is believed to be plastoquinone. Couples the redox reaction to proton translocation, and thus conserves the redox energy in a proton gradient. Cyanobacterial NDH-1 also plays a role in inorganic carbon-concentration. The chain is NAD(P)H-quinone oxidoreductase subunit K from Synechococcus elongatus (strain ATCC 33912 / PCC 7942 / FACHB-805) (Anacystis nidulans R2).